The sequence spans 174 residues: Regulator of G-protein signaling 8 (174 aa).

An RGS domain is found at 46–162 (SFDILLSNKY…IRSKIYQDLL (117 aa)).

It is found in the cell membrane. The protein localises to the membrane. Its subcellular location is the perikaryon. The protein resides in the cell projection. It localises to the dendrite. It is found in the nucleus. Regulates G protein-coupled receptor signaling cascades, including signaling via muscarinic acetylcholine receptors and dopamine receptors. Inhibits signal transduction by increasing the GTPase activity of G protein alpha subunits, thereby driving them into their inactive GDP-bound form. Modulates the activity of potassium channels that are activated in response to G protein-coupled receptor signaling. This is Regulator of G-protein signaling 8 (rgs8) from Danio rerio (Zebrafish).